The primary structure comprises 595 residues: DNA polymerase (595 aa).

One can recognise a 3'-5' exonuclease domain in the interval 1–212 (MIELRHEVQG…CKSLTPLVPD (212 aa)). The tract at residues 213-595 (VSRSLVPYEH…SWGSLYGADY (383 aa)) is polymerase.

It belongs to the DNA polymerase type-A family.

It catalyses the reaction DNA(n) + a 2'-deoxyribonucleoside 5'-triphosphate = DNA(n+1) + diphosphate. Its function is as follows. Replicates viral genomic DNA. This polymerase possesses two enzymatic activities: DNA synthesis (polymerase) and an exonucleolytic activity that degrades single-stranded DNA in the 3'-5' direction. This chain is DNA polymerase (44), found in Mycobacterium phage L5 (Mycobacteriophage L5).